A 193-amino-acid chain; its full sequence is Putative kinase protein 029R (193 aa).

An ATP-binding site is contributed by 9–17 (GIIGSGKSS). 3 residues coordinate substrate: Glu-31, Tyr-43, and Gln-54. Residue Glu-78 is the Proton acceptor of the active site. 2 residues coordinate substrate: Arg-79 and Glu-142.

The protein belongs to the DCK/DGK family.

The sequence is that of Putative kinase protein 029R from Aedes vexans (Inland floodwater mosquito).